Reading from the N-terminus, the 58-residue chain is Metallothionein (58 aa).

The beta stretch occupies residues 1–29; sequence MPDPCCIDKCECKEGGCKAGCKCTSCRCT. Residues Cys5, Cys6, Cys10, Cys12, Cys17, Cys21, Cys23, Cys26, Cys28, Cys31, Cys34, Cys38, Cys40, Cys46, Cys50, Cys54, Cys56, and Cys57 each coordinate a divalent metal cation. Positions 30–58 are alpha; sequence PCEKCSSGCKCTTKEDCCKTCTKPCSCCP.

It belongs to the metallothionein superfamily. Type 3 family.

Its function is as follows. Metallothioneins have a high content of cysteine residues that bind various heavy metals. Class I MTS in marine crustacea are involved in the sequestration of elevated levels of heavy-metal ions. This is Metallothionein from Carcinus maenas (Common shore crab).